The sequence spans 114 residues: Ribosome-binding factor A (114 aa).

The protein belongs to the RbfA family. In terms of assembly, monomer. Binds 30S ribosomal subunits, but not 50S ribosomal subunits or 70S ribosomes.

It localises to the cytoplasm. Its function is as follows. One of several proteins that assist in the late maturation steps of the functional core of the 30S ribosomal subunit. Associates with free 30S ribosomal subunits (but not with 30S subunits that are part of 70S ribosomes or polysomes). Required for efficient processing of 16S rRNA. May interact with the 5'-terminal helix region of 16S rRNA. The sequence is that of Ribosome-binding factor A from Vesicomyosocius okutanii subsp. Calyptogena okutanii (strain HA).